The following is a 166-amino-acid chain: Cyclic pyranopterin monophosphate synthase (166 aa).

Residues L83 to H85 and M121 to E122 contribute to the substrate site. D136 is a catalytic residue.

This sequence belongs to the MoaC family. Homohexamer; trimer of dimers.

The enzyme catalyses (8S)-3',8-cyclo-7,8-dihydroguanosine 5'-triphosphate = cyclic pyranopterin phosphate + diphosphate. It functions in the pathway cofactor biosynthesis; molybdopterin biosynthesis. In terms of biological role, catalyzes the conversion of (8S)-3',8-cyclo-7,8-dihydroguanosine 5'-triphosphate to cyclic pyranopterin monophosphate (cPMP). The sequence is that of Cyclic pyranopterin monophosphate synthase from Syntrophobacter fumaroxidans (strain DSM 10017 / MPOB).